Reading from the N-terminus, the 146-residue chain is Ferredoxin-type protein FwdE (146 aa).

4Fe-4S ferredoxin-type domains lie at 90-115 and 116-145; these read IKLF…TLDN and FTVG…FIKE. [4Fe-4S] cluster is bound by residues Cys-125, Cys-128, Cys-131, and Cys-135.

The cofactor is [4Fe-4S] cluster.

This is Ferredoxin-type protein FwdE (fwdE) from Methanocaldococcus jannaschii (strain ATCC 43067 / DSM 2661 / JAL-1 / JCM 10045 / NBRC 100440) (Methanococcus jannaschii).